The primary structure comprises 310 residues: MSQAIVVAALYKFVTLEDYVELREPLLKTMLDNNVKGTLLLAQEGINGTVSGTREGIDGLLAWLRSDPRLVDIDHKESYCDEQPFYRTKVKLKKEIVTLGVPGVDPNKAVGTYVEPKDWNALISDPEVLLIDTRNDYEVAIGTFKGAIDPKTETFREFPEYIKANFDPSKHKKVAMFCTGGIRCEKASSYMLGEGFESVYHLKGGILKYFEEVPQEESLWDGDCFVFDNRVTVRHDLSEGEYDQCHACRHPINAQERASEHYSPGVSCPHCWDSLSEKTRRSAIDRQKQIELAKARNLPHPIGYYYKAEA.

In terms of domain architecture, Rhodanese spans 124–218 (SDPEVLLIDT…YFEEVPQEES (95 aa)). Catalysis depends on Cys-178, which acts as the Cysteine persulfide intermediate.

Belongs to the TrhO family.

It catalyses the reaction uridine(34) in tRNA + AH2 + O2 = 5-hydroxyuridine(34) in tRNA + A + H2O. Its function is as follows. Catalyzes oxygen-dependent 5-hydroxyuridine (ho5U) modification at position 34 in tRNAs. This chain is tRNA uridine(34) hydroxylase, found in Pseudomonas putida (strain ATCC 47054 / DSM 6125 / CFBP 8728 / NCIMB 11950 / KT2440).